The sequence spans 76 residues: Protein CASC2, isoforms 1/2 (76 aa).

Residues 1-20 (MAGTRGLMLLGPGPVAGPRD) form a disordered region.

The sequence is that of Protein CASC2, isoforms 1/2 (CASC2) from Homo sapiens (Human).